A 271-amino-acid polypeptide reads, in one-letter code: MKKKLKTFSLILLTGSLLVACGRGEVSSHSATLWEQIVYAFAKSIQWLSFNHSIGLGIILFTLIIRAIMMPLYNMQMKSSQKMQEIQPRLKELQKKYPGKDPDNRLKLNDEMQSMYKAEGVNPYASVLPLLIQLPVLWALFQALTRVSFLKVGTFLSLELSQPDPYYILPVLAALFTFLSTWLTNKAAVEKNIALTLMTYVMPFIILVTSFNFASGVVLYWTVSNAFQVFQILLLNNPYKIIKVREEAVRVAHEKEQRVKRAKRKASKKRK.

The signal sequence occupies residues 1–20; that stretch reads MKKKLKTFSLILLTGSLLVA. Residue Cys-21 is the site of N-palmitoyl cysteine attachment. Residue Cys-21 is the site of S-diacylglycerol cysteine attachment. The next 4 membrane-spanning stretches (helical) occupy residues 45–65, 124–144, 163–183, and 201–221; these read IQWLSFNHSIGLGIILFTLII, YASVLPLLIQLPVLWALFQAL, PDPYYILPVLAALFTFLSTWL, and VMPFIILVTSFNFASGVVLYW.

This sequence belongs to the OXA1/ALB3/YidC family. Type 2 subfamily.

It localises to the cell membrane. Required for the insertion and/or proper folding and/or complex formation of integral membrane proteins into the membrane. Involved in integration of membrane proteins that insert both dependently and independently of the Sec translocase complex, as well as at least some lipoproteins. The chain is Membrane protein insertase YidC 1 from Streptococcus agalactiae serotype V (strain ATCC BAA-611 / 2603 V/R).